A 278-amino-acid chain; its full sequence is Large ribosomal subunit protein uL2 (278 aa).

Residues Trp214 to Ser278 form a disordered region.

This sequence belongs to the universal ribosomal protein uL2 family. Part of the 50S ribosomal subunit. Forms a bridge to the 30S subunit in the 70S ribosome.

One of the primary rRNA binding proteins. Required for association of the 30S and 50S subunits to form the 70S ribosome, for tRNA binding and peptide bond formation. It has been suggested to have peptidyltransferase activity; this is somewhat controversial. Makes several contacts with the 16S rRNA in the 70S ribosome. The protein is Large ribosomal subunit protein uL2 of Chelativorans sp. (strain BNC1).